A 157-amino-acid chain; its full sequence is MKPKTLSPILTAKGVRLAIAVGRFNERVTKLLLEGALEAYARLGGDPAEVLVAWVPGSFELPLVAKRLAQRPDVDAVVALGAVIRGETPHFEYVAGQAASGLMQAMLQTEKPIVFGVLTTNTPEEAQERAGGKAGNKGAEAVFTAIEMVRLLEAISR.

5-amino-6-(D-ribitylamino)uracil contacts are provided by residues Phe-24, 58 to 60 (SFE), and 82 to 84 (AVI). 87 to 88 (ET) is a (2S)-2-hydroxy-3-oxobutyl phosphate binding site. The active-site Proton donor is the His-90. Phe-115 contributes to the 5-amino-6-(D-ribitylamino)uracil binding site. Arg-129 is a binding site for (2S)-2-hydroxy-3-oxobutyl phosphate.

This sequence belongs to the DMRL synthase family.

The catalysed reaction is (2S)-2-hydroxy-3-oxobutyl phosphate + 5-amino-6-(D-ribitylamino)uracil = 6,7-dimethyl-8-(1-D-ribityl)lumazine + phosphate + 2 H2O + H(+). The protein operates within cofactor biosynthesis; riboflavin biosynthesis; riboflavin from 2-hydroxy-3-oxobutyl phosphate and 5-amino-6-(D-ribitylamino)uracil: step 1/2. Catalyzes the formation of 6,7-dimethyl-8-ribityllumazine by condensation of 5-amino-6-(D-ribitylamino)uracil with 3,4-dihydroxy-2-butanone 4-phosphate. This is the penultimate step in the biosynthesis of riboflavin. The chain is 6,7-dimethyl-8-ribityllumazine synthase from Thermus thermophilus (strain ATCC BAA-163 / DSM 7039 / HB27).